The following is a 483-amino-acid chain: Regulatory protein ViaA (483 aa).

The protein belongs to the ViaA family. Homodimer. Interacts with RavA.

It is found in the cytoplasm. In terms of biological role, component of the RavA-ViaA chaperone complex, which may act on the membrane to optimize the function of some of the respiratory chains. ViaA stimulates the ATPase activity of RavA. This chain is Regulatory protein ViaA, found in Escherichia coli O1:K1 / APEC.